The chain runs to 1503 residues: DNA-directed RNA polymerase subunit beta' (1503 aa).

Cys60, Cys62, Cys75, and Cys78 together coordinate Zn(2+). Residues Asp626, Asp628, and Asp630 each coordinate Mg(2+). Residues Cys1002, Cys1075, Cys1082, and Cys1085 each coordinate Zn(2+). A disordered region spans residues 1439-1503 (EESQQAEEAP…EEEDNDLPAF (65 aa)). Positions 1486–1503 (GDNDQSDAEEEDNDLPAF) are enriched in acidic residues.

Belongs to the RNA polymerase beta' chain family. In terms of assembly, the RNAP catalytic core consists of 2 alpha, 1 beta, 1 beta' and 1 omega subunit. When a sigma factor is associated with the core the holoenzyme is formed, which can initiate transcription. Mg(2+) serves as cofactor. Requires Zn(2+) as cofactor.

It carries out the reaction RNA(n) + a ribonucleoside 5'-triphosphate = RNA(n+1) + diphosphate. DNA-dependent RNA polymerase catalyzes the transcription of DNA into RNA using the four ribonucleoside triphosphates as substrates. This Chloroflexus aurantiacus (strain ATCC 29364 / DSM 637 / Y-400-fl) protein is DNA-directed RNA polymerase subunit beta'.